Consider the following 404-residue polypeptide: Glucose-1-phosphate adenylyltransferase (404 aa).

Residues Tyr99, Gly164, 179-180 (EK), and Ser197 contribute to the alpha-D-glucose 1-phosphate site.

It belongs to the bacterial/plant glucose-1-phosphate adenylyltransferase family.

It catalyses the reaction alpha-D-glucose 1-phosphate + ATP + H(+) = ADP-alpha-D-glucose + diphosphate. It functions in the pathway capsule biogenesis; capsule polysaccharide biosynthesis. It participates in glycan biosynthesis; glycogen biosynthesis. Functionally, involved in the biosynthesis of ADP-glucose, a building block, required in the biosynthesis of maltose-1-phosphate (M1P) and in the elongation reactions to produce linear alpha-1,4-glucans. Catalyzes the reaction between ATP and alpha-D-glucose 1-phosphate (G1P) to produce pyrophosphate and ADP-Glc. This Mycobacteroides abscessus (strain ATCC 19977 / DSM 44196 / CCUG 20993 / CIP 104536 / JCM 13569 / NCTC 13031 / TMC 1543 / L948) (Mycobacterium abscessus) protein is Glucose-1-phosphate adenylyltransferase.